A 369-amino-acid chain; its full sequence is MIKLKQLIAATLLLSTAFGVHAERLKDIASISGVRANQLIGYGLVVGLNGTGDQTTQTPFTLQTFNNMLSQFGIKVPSGSGTVQLKNVAAVAVYADLPAFAKPGQTVDITVSSIGNSKSLRGGALLMTPMKGVDGNVYAIAQGNLVVGGFDAEGRDGSKITVNVPSSGRIPGGASVERSVPSGFNQGNTLTLNLNRSDFTTAKRIVDKINELLGPGVAQALDGGSVRVTAPLDPGQRVDYLSILENLEVDPGQTAAKVIINSRTGTIVIGQNVKVSPAAVTHGSLTVTITEDPIVSQPGALSGGQTAVVPRSRVNAQQELHPMFKFGPGTTLDEIVRAVNQVGAAPGDLMAILEALKQAGALQADLIVI.

A signal peptide spans 1–22 (MIKLKQLIAATLLLSTAFGVHA).

Belongs to the FlgI family. The basal body constitutes a major portion of the flagellar organelle and consists of four rings (L,P,S, and M) mounted on a central rod.

Its subcellular location is the periplasm. It localises to the bacterial flagellum basal body. Its function is as follows. Assembles around the rod to form the L-ring and probably protects the motor/basal body from shearing forces during rotation. This Pseudomonas savastanoi pv. phaseolicola (strain 1448A / Race 6) (Pseudomonas syringae pv. phaseolicola (strain 1448A / Race 6)) protein is Flagellar P-ring protein.